We begin with the raw amino-acid sequence, 141 residues long: Hemoglobin subunit alpha (141 aa).

The 141-residue stretch at 1-141 folds into the Globin domain; sequence VLSPADKTNV…VSTVLTSKYR (141 aa). A Phosphoserine modification is found at Ser-3. Lys-7 carries the post-translational modification N6-succinyllysine. Thr-8 bears the Phosphothreonine mark. The residue at position 11 (Lys-11) is an N6-succinyllysine. Lys-16 carries the N6-acetyllysine; alternate modification. Lys-16 is modified (N6-succinyllysine; alternate). Residue Tyr-24 is modified to Phosphotyrosine. A Phosphoserine modification is found at Ser-35. Lys-40 is subject to N6-succinyllysine. His-58 provides a ligand contact to O2. His-87 lines the heme b pocket. Phosphoserine is present on Ser-102. The residue at position 108 (Thr-108) is a Phosphothreonine. 2 positions are modified to phosphoserine: Ser-124 and Ser-131. Residues Thr-134 and Thr-137 each carry the phosphothreonine modification. Residue Ser-138 is modified to Phosphoserine.

Belongs to the globin family. As to quaternary structure, heterotetramer of two alpha chains and two beta chains. Red blood cells.

Functionally, involved in oxygen transport from the lung to the various peripheral tissues. In terms of biological role, hemopressin acts as an antagonist peptide of the cannabinoid receptor CNR1. Hemopressin-binding efficiently blocks cannabinoid receptor CNR1 and subsequent signaling. The sequence is that of Hemoglobin subunit alpha (HBA) from Cynopterus sphinx (Indian short-nosed fruit bat).